We begin with the raw amino-acid sequence, 90 residues long: DNA/RNA-binding protein Alba (90 aa).

Lysine 8 is modified (N6-acetyllysine).

This sequence belongs to the histone-like Alba family. In terms of processing, acetylated. Acetylation at Lys-8 decreases DNA-binding affinity.

Its subcellular location is the cytoplasm. It localises to the chromosome. In terms of biological role, binds double-stranded DNA tightly but without sequence specificity. Involved in DNA compaction. The protein is DNA/RNA-binding protein Alba of Nanoarchaeum equitans (strain Kin4-M).